Reading from the N-terminus, the 486-residue chain is N-succinylglutamate 5-semialdehyde dehydrogenase (486 aa).

220-225 (GSSRTG) is an NAD(+) binding site. Residues Glu243 and Cys277 contribute to the active site.

The protein belongs to the aldehyde dehydrogenase family. AstD subfamily.

It carries out the reaction N-succinyl-L-glutamate 5-semialdehyde + NAD(+) + H2O = N-succinyl-L-glutamate + NADH + 2 H(+). It functions in the pathway amino-acid degradation; L-arginine degradation via AST pathway; L-glutamate and succinate from L-arginine: step 4/5. Catalyzes the NAD-dependent reduction of succinylglutamate semialdehyde into succinylglutamate. This chain is N-succinylglutamate 5-semialdehyde dehydrogenase, found in Shewanella baltica (strain OS155 / ATCC BAA-1091).